A 541-amino-acid polypeptide reads, in one-letter code: Eukaryotic translation initiation factor 3 subunit D-1 (541 aa).

Residues 98–136 (VQKPPHQRGRFRNMRGRGGRGRNPRGGLNNHHHHGMTTL) form a disordered region. The span at 100–120 (KPPHQRGRFRNMRGRGGRGRN) shows a compositional bias: basic residues.

This sequence belongs to the eIF-3 subunit D family. Component of the eukaryotic translation initiation factor 3 (eIF-3) complex. The eIF-3 complex interacts with pix.

It localises to the cytoplasm. In terms of biological role, mRNA cap-binding component of the eukaryotic translation initiation factor 3 (eIF-3) complex, which is involved in protein synthesis of a specialized repertoire of mRNAs and, together with other initiation factors, stimulates binding of mRNA and methionyl-tRNAi to the 40S ribosome. The eIF-3 complex specifically targets and initiates translation of a subset of mRNAs involved in cell proliferation. In the eIF-3 complex, eif3d specifically recognizes and binds the 7-methylguanosine cap of a subset of mRNAs. This chain is Eukaryotic translation initiation factor 3 subunit D-1, found in Drosophila persimilis (Fruit fly).